Reading from the N-terminus, the 190-residue chain is Imidazole glycerol phosphate synthase subunit HisH (190 aa).

The Glutamine amidotransferase type-1 domain occupies 2-190 (IVGVVDYTVG…IKRFLAVAKR (189 aa)). Residue Cys-73 is the Nucleophile of the active site. Catalysis depends on residues His-169 and Glu-171.

As to quaternary structure, heterodimer of HisH and HisF.

The protein resides in the cytoplasm. The enzyme catalyses 5-[(5-phospho-1-deoxy-D-ribulos-1-ylimino)methylamino]-1-(5-phospho-beta-D-ribosyl)imidazole-4-carboxamide + L-glutamine = D-erythro-1-(imidazol-4-yl)glycerol 3-phosphate + 5-amino-1-(5-phospho-beta-D-ribosyl)imidazole-4-carboxamide + L-glutamate + H(+). It catalyses the reaction L-glutamine + H2O = L-glutamate + NH4(+). Its pathway is amino-acid biosynthesis; L-histidine biosynthesis; L-histidine from 5-phospho-alpha-D-ribose 1-diphosphate: step 5/9. IGPS catalyzes the conversion of PRFAR and glutamine to IGP, AICAR and glutamate. The HisH subunit catalyzes the hydrolysis of glutamine to glutamate and ammonia as part of the synthesis of IGP and AICAR. The resulting ammonia molecule is channeled to the active site of HisF. This is Imidazole glycerol phosphate synthase subunit HisH from Pyrobaculum aerophilum (strain ATCC 51768 / DSM 7523 / JCM 9630 / CIP 104966 / NBRC 100827 / IM2).